A 310-amino-acid chain; its full sequence is Methionyl-tRNA formyltransferase (310 aa).

110-113 (SLLP) contributes to the (6S)-5,6,7,8-tetrahydrofolate binding site.

Belongs to the Fmt family.

The catalysed reaction is L-methionyl-tRNA(fMet) + (6R)-10-formyltetrahydrofolate = N-formyl-L-methionyl-tRNA(fMet) + (6S)-5,6,7,8-tetrahydrofolate + H(+). Its function is as follows. Attaches a formyl group to the free amino group of methionyl-tRNA(fMet). The formyl group appears to play a dual role in the initiator identity of N-formylmethionyl-tRNA by promoting its recognition by IF2 and preventing the misappropriation of this tRNA by the elongation apparatus. This is Methionyl-tRNA formyltransferase from Streptomyces avermitilis (strain ATCC 31267 / DSM 46492 / JCM 5070 / NBRC 14893 / NCIMB 12804 / NRRL 8165 / MA-4680).